The sequence spans 276 residues: NAC domain-containing protein 67 (276 aa).

Residues 17 to 170 (LPPGFRFHPT…DWVLCRLYNK (154 aa)) form the NAC domain.

Expressed in leaf blades.

Its subcellular location is the nucleus. Probable transcription factor involved in stress response. This Oryza sativa subsp. japonica (Rice) protein is NAC domain-containing protein 67.